The sequence spans 22 residues: thr operon leader peptide (22 aa).

It belongs to the thr operon leader peptide family.

In terms of biological role, this protein is involved in control of the biosynthesis of threonine. The protein is thr operon leader peptide of Yersinia enterocolitica serotype O:8 / biotype 1B (strain NCTC 13174 / 8081).